The primary structure comprises 128 residues: Probable 4-amino-4-deoxy-L-arabinose-phosphoundecaprenol flippase subunit ArnF (128 aa).

At 1-5 (MKGYG) the chain is on the cytoplasmic side. Residues 6 to 26 (WGIGSVVLVTVAQLILKWGMM) form a helical membrane-spanning segment. Residues 27-47 (NTPLMSLADINGQFVFNHLPQ) lie on the Periplasmic side of the membrane. The chain crosses the membrane as a helical span at residues 48 to 68 (FIAVICGLAGYALSMLCWFFA). The Cytoplasmic segment spans residues 69–77 (LRYLPLNRA). Residues 78-98 (YPLLSLSYALVYLGAVSLPWF) traverse the membrane as a helical segment. Over 99–101 (SES) the chain is Periplasmic. The helical transmembrane segment at 102-122 (ATLLKTLGAGFILLGIWLINT) threads the bilayer. The Cytoplasmic portion of the chain corresponds to 123-128 (KPIAKD).

Belongs to the ArnF family. Heterodimer of ArnE and ArnF.

It localises to the cell inner membrane. It participates in bacterial outer membrane biogenesis; lipopolysaccharide biosynthesis. Translocates 4-amino-4-deoxy-L-arabinose-phosphoundecaprenol (alpha-L-Ara4N-phosphoundecaprenol) from the cytoplasmic to the periplasmic side of the inner membrane. The sequence is that of Probable 4-amino-4-deoxy-L-arabinose-phosphoundecaprenol flippase subunit ArnF from Yersinia enterocolitica serotype O:8 / biotype 1B (strain NCTC 13174 / 8081).